The primary structure comprises 452 residues: Ribosomal protein uS12 methylthiotransferase RimO (452 aa).

The MTTase N-terminal domain occupies 3–118 (GKIGFVSLGC…VMQAIHLHLP (116 aa)). [4Fe-4S] cluster-binding residues include Cys-12, Cys-48, Cys-77, Cys-149, Cys-153, and Cys-156. In terms of domain architecture, Radical SAM core spans 135-381 (LTPKHYAYLK…MAKAEDISIK (247 aa)). Positions 384 to 452 (AKKIGKRVQV…SQGHDLIAET (69 aa)) constitute a TRAM domain.

Belongs to the methylthiotransferase family. RimO subfamily. [4Fe-4S] cluster is required as a cofactor.

Its subcellular location is the cytoplasm. The enzyme catalyses L-aspartate(89)-[ribosomal protein uS12]-hydrogen + (sulfur carrier)-SH + AH2 + 2 S-adenosyl-L-methionine = 3-methylsulfanyl-L-aspartate(89)-[ribosomal protein uS12]-hydrogen + (sulfur carrier)-H + 5'-deoxyadenosine + L-methionine + A + S-adenosyl-L-homocysteine + 2 H(+). Catalyzes the methylthiolation of an aspartic acid residue of ribosomal protein uS12. This is Ribosomal protein uS12 methylthiotransferase RimO from Polynucleobacter asymbioticus (strain DSM 18221 / CIP 109841 / QLW-P1DMWA-1) (Polynucleobacter necessarius subsp. asymbioticus).